A 1182-amino-acid chain; its full sequence is MAQQKPEWGNQMKNEGLDDMTLLSKVSNDQILDNLKKRFEKDIIYTNIGDVLISVNPFKFIDGMYSDEVLQEYIGKSRIELPPHVFAVAEQTYRSMINEKENQCVIISGESGAGKTEAAKKIMQYIADVSGERGSSSNQKVEHVKSIILETNPLLEAFGNAKTLRNNNSSRFGKYFEIQFNQKNEPEGGKITNYLLEKSRVVFQLKGERNFHIFYQFCRGATPQEQQEFGIYGPENFAYLTKGDTLDIDGVDDVEEFALTRNAMNVIGIPANEQKQIFKLLAAILWIGNIDFKEQAGDKVTIADTSVLDFVSQLLDVPSHFLKTALEFRQMETRHGNQRGTQYNVPLNKTQAIAGRDALAKAIYDRLFNWLVDRINKEMDNPQKGLMIGVLDIYGFEVFDRNGFEQFCINYVNEKLQQIFIEFTLKMEQEEYVREGIKWEPIPFFDNKIVCELIEGKNPPGIFSILDDVCRAVHSQAEGADQKLLQSIAVCKSNPHFDTRGNAFCVKHYAGDVVYEGPGMIEKNKDTLLKDHLEILQMSANNFLVGLFPDVIDTDSKKLPSTAGFKIKSQAAELVATLMKSTPHYIRTIKPNDLKKPNILEGGRVLHQVKYLGLLDNIKVRRAGFAYRATFDRFFQRYYLLSDKTCYAGNNIWKGDALSACRAILASQNVDNTQYQIGKTKIFIRYPEMLFSLEETRERYWHDMASRIKNAYRNYKAFQFECSNRIKNAFRNYKLYRQRCAQTIQGYFRAWKQASPFFDLRMQNEQLFQGRKERNRFSMISVRKYFGDYLDVRSQSYFLDAMAEGRNEDVIFSSKSQVMVHPILSANKLSPRFLIVTKQAIYLIKLKQKKNLATYLLDRRVPLAEVTSFSLSSLADNLLVIHTSTQFDVAVTTEFKTELVALINKQKGTTLAVNFGQSIQYFKKKGSNNTVTFLKDEMHKEIFLKKNQFHIASGLPASTTVAKVRKNPSQVSTPSKPIAKPVAKPMVAKPSGGSVIMKKPAPAAPPSGPPVMKKPAPTAPGGAPMMKKPAPAPGGAPMMKKPAPVPGGPAPGGSAIMKPAGGVSKPLPSPTGAPMMKKPAPTAPGGPAPAGAPTPMMKKPAGQPMMKPIAKPQPTPMKKPAAPPPQQYIALYEYDAMQPDELTFKENDVINLIKKVDADWWQGELVRTKQIGMLPSNYVQQI.

Positions Glu-15 to Glu-698 constitute a Myosin motor domain. Position 109 to 116 (Gly-109 to Thr-116) interacts with ATP. Residues Ala-571 to Asp-593 are actin-binding. A TH1 domain is found at Arg-774–Ala-957. 2 disordered regions span residues Lys-999–Gly-1052 and Ser-1064–Gln-1103. Positions Lys-1013 to Pro-1042 are enriched in low complexity. Residues Pro-1081–Ala-1092 are compositionally biased toward pro residues. Residues Pro-1123 to Ile-1182 enclose the SH3 domain.

It belongs to the TRAFAC class myosin-kinesin ATPase superfamily. Myosin family. In terms of assembly, myosin I heavy chain is single-headed. Dimer of a heavy and a light chain. Inability to self-assemble into filaments.

It localises to the cell projection. It is found in the lamellipodium. Functionally, myosin is a protein that binds to actin and has ATPase activity that is activated by actin. Involved in the process of phagocytosis and appears to support streaming behavior. The sequence is that of Myosin IC heavy chain (myoC) from Dictyostelium discoideum (Social amoeba).